The chain runs to 256 residues: Thiazole synthase (256 aa).

Lys-98 serves as the catalytic Schiff-base intermediate with DXP. Residues Gly-159, 185 to 186, and 207 to 208 each bind 1-deoxy-D-xylulose 5-phosphate; these read AG and NT.

Belongs to the ThiG family. In terms of assembly, homotetramer. Forms heterodimers with either ThiH or ThiS.

Its subcellular location is the cytoplasm. The catalysed reaction is [ThiS sulfur-carrier protein]-C-terminal-Gly-aminoethanethioate + 2-iminoacetate + 1-deoxy-D-xylulose 5-phosphate = [ThiS sulfur-carrier protein]-C-terminal Gly-Gly + 2-[(2R,5Z)-2-carboxy-4-methylthiazol-5(2H)-ylidene]ethyl phosphate + 2 H2O + H(+). It participates in cofactor biosynthesis; thiamine diphosphate biosynthesis. In terms of biological role, catalyzes the rearrangement of 1-deoxy-D-xylulose 5-phosphate (DXP) to produce the thiazole phosphate moiety of thiamine. Sulfur is provided by the thiocarboxylate moiety of the carrier protein ThiS. In vitro, sulfur can be provided by H(2)S. The polypeptide is Thiazole synthase (Aliivibrio fischeri (strain MJ11) (Vibrio fischeri)).